The primary structure comprises 172 residues: NADH-quinone oxidoreductase subunit B (172 aa).

[4Fe-4S] cluster contacts are provided by Cys46, Cys47, Cys111, and Cys141.

The protein belongs to the complex I 20 kDa subunit family. In terms of assembly, NDH-1 is composed of 14 different subunits. Subunits NuoB, C, D, E, F, and G constitute the peripheral sector of the complex. [4Fe-4S] cluster is required as a cofactor.

Its subcellular location is the cell membrane. The catalysed reaction is a quinone + NADH + 5 H(+)(in) = a quinol + NAD(+) + 4 H(+)(out). In terms of biological role, NDH-1 shuttles electrons from NADH, via FMN and iron-sulfur (Fe-S) centers, to quinones in the respiratory chain. The immediate electron acceptor for the enzyme in this species is believed to be a menaquinone. Couples the redox reaction to proton translocation (for every two electrons transferred, four hydrogen ions are translocated across the cytoplasmic membrane), and thus conserves the redox energy in a proton gradient. The polypeptide is NADH-quinone oxidoreductase subunit B (Bacillus anthracis (strain A0248)).